The following is a 274-amino-acid chain: Rhamnulose-1-phosphate aldolase (274 aa).

Residue Glu-117 is part of the active site. Residues His-141, His-143, and His-212 each contribute to the Zn(2+) site.

This sequence belongs to the aldolase class II family. RhaD subfamily. Homotetramer. The cofactor is Zn(2+).

The protein localises to the cytoplasm. The enzyme catalyses L-rhamnulose 1-phosphate = (S)-lactaldehyde + dihydroxyacetone phosphate. It functions in the pathway carbohydrate degradation; L-rhamnose degradation; glycerone phosphate from L-rhamnose: step 3/3. Functionally, catalyzes the reversible cleavage of L-rhamnulose-1-phosphate to dihydroxyacetone phosphate (DHAP) and L-lactaldehyde. In Pectobacterium carotovorum subsp. carotovorum (strain PC1), this protein is Rhamnulose-1-phosphate aldolase.